Reading from the N-terminus, the 389-residue chain is Migration and invasion-inhibitory protein (389 aa).

Positions 44 to 54 are enriched in low complexity; that stretch reads LDYSSSSNNLE. Disordered stretches follow at residues 44–80 and 131–150; these read LDYSSSSNNLEMPLSQETSASSVAPNSQDKRHVWDPL and KRPVSLGGPKGLGPDKAQVP. The segment covering 58-70 has biased composition (polar residues); that stretch reads SQETSASSVAPNS. Over residues 71–80 the composition is skewed to basic and acidic residues; it reads QDKRHVWDPL. S309 bears the Phosphoserine mark.

In terms of assembly, interacts with IGFBP2.

Its function is as follows. Inhibits glioma cells invasion and down-regulates adhesion- and motility-associated genes such as NFKB2 and ICAM1. Exhibits opposing effects to IGFBP2 on cell invasion. In Rattus norvegicus (Rat), this protein is Migration and invasion-inhibitory protein (Miip).